The sequence spans 213 residues: Uridine kinase (213 aa).

Residue glycine 15–serine 22 coordinates ATP.

Belongs to the uridine kinase family.

It localises to the cytoplasm. The enzyme catalyses uridine + ATP = UMP + ADP + H(+). It carries out the reaction cytidine + ATP = CMP + ADP + H(+). It functions in the pathway pyrimidine metabolism; CTP biosynthesis via salvage pathway; CTP from cytidine: step 1/3. The protein operates within pyrimidine metabolism; UMP biosynthesis via salvage pathway; UMP from uridine: step 1/1. The chain is Uridine kinase from Sodalis glossinidius (strain morsitans).